Consider the following 287-residue polypeptide: Pyridoxal kinase PdxY (287 aa).

Substrate-binding positions include S10 and 45-46 (TQ). ATP-binding positions include D112, A144, E149, K182, and 209 to 212 (RPLV). Residue D224 coordinates substrate.

It belongs to the pyridoxine kinase family. PdxY subfamily. In terms of assembly, homodimer. The cofactor is Mg(2+).

The enzyme catalyses pyridoxal + ATP = pyridoxal 5'-phosphate + ADP + H(+). The protein operates within cofactor metabolism; pyridoxal 5'-phosphate salvage; pyridoxal 5'-phosphate from pyridoxal: step 1/1. In terms of biological role, pyridoxal kinase involved in the salvage pathway of pyridoxal 5'-phosphate (PLP). Catalyzes the phosphorylation of pyridoxal to PLP. The chain is Pyridoxal kinase PdxY from Shigella sonnei (strain Ss046).